Here is a 59-residue protein sequence, read N- to C-terminus: Dendroaspin (59 aa).

4 cysteine pairs are disulfide-bonded: Cys3–Cys22, Cys17–Cys37, Cys39–Cys51, and Cys52–Cys57. A Cell attachment site motif is present at residues 43 to 45; the sequence is RGD.

It belongs to the three-finger toxin family. Short-chain subfamily. Antiplatelet toxin sub-subfamily. Expressed by the venom gland.

It localises to the secreted. Functionally, inhibits ADP-induced platelet aggregation and inhibits the binding of purified platelet fibrinogen receptor alpha-IIb/beta-3 (ITGA2B/ITGB3) to immobilized fibrinogen. Has also been described to inhibit cell adhesion to fibrinogen, fibronectin, laminin and collagen. This is Dendroaspin from Dendroaspis jamesoni kaimosae (Eastern Jameson's mamba).